We begin with the raw amino-acid sequence, 556 residues long: MNPYAYAATHGPRAGDRVRLGDSGLTIRVESDAQQYGDEFLAGFGKTARDGLHLKAAAVRDTCDVVISNVVVIDAAQGIRKVSIGIREGRICSIGRAGNPDTLAGVDVVVGTGTSIVSGEGLIATAGAVDTHVHLLSPRIMEASLASGVTTVIGQEFGPVWGVGVNSPWALRHAFSAFDAWPVNIGFLGRGSSSDPAPLVEALAEGGASGFKVHEDMGAHTRALDTALRVAEEHDVQVALHSDGLNECLSVEDTLRVLDGRTIHAFHIEGCGGGHVPNVLKMAGVPNVIGSSTNPTLPFGRDAVAEHYGMIVSVHDLKPDLPGDAAMARDRIRAGTMGAEDVLHDLGAIGITSSDAQGMGRAGETVRRTFAMAGKMKAEFGAPEDHDNARVLRYLAKLTINPALAHGLAHEVGSIEVGKLADIVLWRPEFFGAKPQLVLKSGFPAYGVVGDPNAATDTCEPLVLGPQFGAHGATPAEISVAFVAQAALDQGNDRMPTRRRRVAVRGTRGIGPADLRLNSRTGAVDVDQRTGLVTLDGDPIRSEPADSVSLNRLYFL.

A Urease domain is found at 127 to 556 (GAVDTHVHLL…SVSLNRLYFL (430 aa)). Residues H132, H134, and K212 each coordinate Ni(2+). K212 carries the N6-carboxylysine modification. Position 214 (H214) interacts with substrate. Residues H241 and H267 each coordinate Ni(2+). The active-site Proton donor is the H315. D355 contacts Ni(2+).

Belongs to the metallo-dependent hydrolases superfamily. Urease alpha subunit family. May form a heterohexamer of 3 UreC (alpha) and 3 UreAB (gamma/beta) subunits. May also form a heterotrimer of UreA (gamma), UreB (beta) and UreC (alpha) subunits. Three heterotrimers associate to form the active enzyme. Ni cation serves as cofactor. Carboxylation allows a single lysine to coordinate two nickel ions.

It is found in the cytoplasm. It catalyses the reaction urea + 2 H2O + H(+) = hydrogencarbonate + 2 NH4(+). It functions in the pathway nitrogen metabolism; urea degradation; CO(2) and NH(3) from urea (urease route): step 1/1. The sequence is that of Urease subunit alpha 1 from Streptomyces avermitilis (strain ATCC 31267 / DSM 46492 / JCM 5070 / NBRC 14893 / NCIMB 12804 / NRRL 8165 / MA-4680).